Reading from the N-terminus, the 65-residue chain is Sarcoplasmic/endoplasmic reticulum calcium ATPase regulator ARLN (65 aa).

Residue M1 is modified to N-acetylmethionine. The tract at residues 1-36 is disordered; sequence MEVSQAASGTDGVRERRGSFEAGRRNQDEAPQSGMN. Over residues 12–28 the composition is skewed to basic and acidic residues; the sequence is GVRERRGSFEAGRRNQD. Residue S19 is modified to Phosphoserine. A helical membrane pass occupies residues 44–64; that stretch reads WLDLWLFILFDLALFVFVYLL.

Homooligomer. Can also form heterooligomers with other sarcoplasmic/endoplasmic reticulum calcium ATPase (SERCA) regulators ERLN, PLN, SLN and STRIT1/DWORF. Monomer. Interacts as a monomer with ATP2A2/SERCA2; the interaction results in inhibition of ATP2A2 Ca(2+) affinity. As to expression, in the embryo, expressed in heart, epidermal epithelium, salivary gland, brown fat, intestinal epithelium and bladder urothelium.

The protein resides in the endoplasmic reticulum membrane. Inhibits the activity of the calcium ATPases ATP2A2/SERCA2 and ATP2A3/SERCA3 by decreasing their apparent affinity for Ca(2+). In Mus musculus (Mouse), this protein is Sarcoplasmic/endoplasmic reticulum calcium ATPase regulator ARLN (Arln).